The primary structure comprises 604 residues: BTB/POZ domain-containing protein SR1IP1 (604 aa).

Residues 27 to 96 (SDVTVHVGEA…CYGINFDMST (70 aa)) form the BTB domain. Residues 201-474 (DWWAEDLTVL…VQVLYYEQQR (274 aa)) enclose the NPH3 domain. The residue at position 415 (Y415) is a Phosphotyrosine. Disordered regions lie at residues 478-499 (EVTNDSDSPAPPPPQPAAVLPP) and 532-604 (FEKE…HSIS). Residues 500–541 (KLSSYTDELSKLKRENQDLKLELLKMKMKLKEFEKESEKKTS) are a coiled coil. Residues 541–558 (SSSTISTNPSSPISTAST) show a composition bias toward low complexity. Basic residues predominate over residues 591–604 (GRTKPPKDRRHSIS).

Belongs to the NPH3 family. In terms of assembly, interacts with CAMTA3 and CUL3A.

The protein operates within protein modification; protein ubiquitination. Acts as a substrate-specific adapter of an E3 ubiquitin-protein ligase complex (CUL3-RBX1-BTB) which mediates the ubiquitination and subsequent proteasomal degradation of target proteins. Involved in disease resistance. Acts as a substrate adapter that recruits CAMTA3/SR1 for ubiquitination and degradation during pathogen infection. Acts as a positive regulator of plant defense by removing the defense suppressor CAMTA3/SR1. The polypeptide is BTB/POZ domain-containing protein SR1IP1 (Arabidopsis thaliana (Mouse-ear cress)).